Here is a 212-residue protein sequence, read N- to C-terminus: ATP-dependent dethiobiotin synthetase BioD (212 aa).

10–15 (GVGKTF) provides a ligand contact to ATP. A Mg(2+)-binding site is contributed by T14. K36 is a catalytic residue. Position 40 (S40) interacts with substrate. ATP contacts are provided by residues D45, 106–109 (EGAG), and 167–168 (NC). Residues D45 and E106 each coordinate Mg(2+).

It belongs to the dethiobiotin synthetase family. In terms of assembly, homodimer. Mg(2+) is required as a cofactor.

Its subcellular location is the cytoplasm. The enzyme catalyses (7R,8S)-7,8-diammoniononanoate + CO2 + ATP = (4R,5S)-dethiobiotin + ADP + phosphate + 3 H(+). Its pathway is cofactor biosynthesis; biotin biosynthesis; biotin from 7,8-diaminononanoate: step 1/2. In terms of biological role, catalyzes a mechanistically unusual reaction, the ATP-dependent insertion of CO2 between the N7 and N8 nitrogen atoms of 7,8-diaminopelargonic acid (DAPA, also called 7,8-diammoniononanoate) to form a ureido ring. The chain is ATP-dependent dethiobiotin synthetase BioD from Methanococcus aeolicus (strain ATCC BAA-1280 / DSM 17508 / OCM 812 / Nankai-3).